The chain runs to 154 residues: D-aminoacyl-tRNA deacylase (154 aa).

Residues 138 to 139 carry the Gly-cisPro motif, important for rejection of L-amino acids motif; it reads GP.

The protein belongs to the DTD family. In terms of assembly, homodimer.

The protein localises to the cytoplasm. It carries out the reaction glycyl-tRNA(Ala) + H2O = tRNA(Ala) + glycine + H(+). It catalyses the reaction a D-aminoacyl-tRNA + H2O = a tRNA + a D-alpha-amino acid + H(+). An aminoacyl-tRNA editing enzyme that deacylates mischarged D-aminoacyl-tRNAs. Also deacylates mischarged glycyl-tRNA(Ala), protecting cells against glycine mischarging by AlaRS. Acts via tRNA-based rather than protein-based catalysis; rejects L-amino acids rather than detecting D-amino acids in the active site. By recycling D-aminoacyl-tRNA to D-amino acids and free tRNA molecules, this enzyme counteracts the toxicity associated with the formation of D-aminoacyl-tRNA entities in vivo and helps enforce protein L-homochirality. The polypeptide is D-aminoacyl-tRNA deacylase (Halorhodospira halophila (strain DSM 244 / SL1) (Ectothiorhodospira halophila (strain DSM 244 / SL1))).